The following is a 793-amino-acid chain: Transcription factor opdR (793 aa).

Disordered regions lie at residues 1–29, 60–113, and 457–476; these read MAQD…DPCR, TASS…QSQN, and LDDE…QPSE. Residues 25-53 constitute a DNA-binding region (zn(2)-C6 fungal-type); sequence CDPCRRRKVRCDRKFPCGQCERARTALQC.

It localises to the nucleus. In terms of biological role, transcription factor; part of the gene cluster that mediates the biosynthesis of oxopyrrolidines, polyketide-amino acid hybrid compounds with feature structures of tetramic acid. The polypeptide is Transcription factor opdR (Penicillium oxalicum (strain 114-2 / CGMCC 5302) (Penicillium decumbens)).